We begin with the raw amino-acid sequence, 172 residues long: UBA-like domain-containing protein 2 (172 aa).

Over residues 118–130 the composition is skewed to pro residues; it reads PPNQQPVWLPPSS. Residues 118–172 are disordered; the sequence is PPNQQPVWLPPSSPTGHHTLHHHHHHMHPPPSWPPVSQPANGPQTPVISALHGQR. Basic residues predominate over residues 135-145; that stretch reads HTLHHHHHHMH.

Belongs to the UBALD family.

This chain is UBA-like domain-containing protein 2 (ubald2), found in Danio rerio (Zebrafish).